The chain runs to 249 residues: NH(3)-dependent NAD(+) synthetase (249 aa).

Residue 29–36 (GVSGGVDS) coordinates ATP. Asp35 serves as a coordination point for Mg(2+). Arg116 provides a ligand contact to deamido-NAD(+). Residue Thr136 coordinates ATP. Glu141 serves as a coordination point for Mg(2+). Deamido-NAD(+) contacts are provided by Lys149 and Asp156. The ATP site is built by Lys165 and Ser187. Position 233–234 (233–234 (HK)) interacts with deamido-NAD(+).

The protein belongs to the NAD synthetase family. As to quaternary structure, homodimer.

The catalysed reaction is deamido-NAD(+) + NH4(+) + ATP = AMP + diphosphate + NAD(+) + H(+). Its pathway is cofactor biosynthesis; NAD(+) biosynthesis; NAD(+) from deamido-NAD(+) (ammonia route): step 1/1. Functionally, catalyzes the ATP-dependent amidation of deamido-NAD to form NAD. Uses ammonia as a nitrogen source. The sequence is that of NH(3)-dependent NAD(+) synthetase from Syntrophomonas wolfei subsp. wolfei (strain DSM 2245B / Goettingen).